The chain runs to 87 residues: U3-theraphotoxin-Hhn1p (87 aa).

An N-terminal signal peptide occupies residues 1–24; that stretch reads MVNMKASMFLTFAGLVLLFVVCYA. A propeptide spanning residues 25-52 is cleaved from the precursor; that stretch reads SESEEKEFPKEMLSSIFAVDNDFKQEER. 3 cysteine pairs are disulfide-bonded: cysteine 54–cysteine 67, cysteine 61–cysteine 72, and cysteine 66–cysteine 79.

The protein belongs to the neurotoxin 10 (Hwtx-1) family. 51 (Hntx-8) subfamily. Hntx-8 sub-subfamily. As to expression, expressed by the venom gland.

The protein localises to the secreted. In terms of biological role, ion channel inhibitor. The polypeptide is U3-theraphotoxin-Hhn1p (Cyriopagopus hainanus (Chinese bird spider)).